The sequence spans 128 residues: T-cell leukemia/lymphoma protein 1B (128 aa).

It belongs to the TCL1 family. Interacts with AKT1 and AKT2 (via PH domain). Does not interact with AKT3. In terms of tissue distribution, expressed in a variety of tissues including placenta and testis.

Functionally, enhances the phosphorylation and activation of AKT1 and AKT2. The polypeptide is T-cell leukemia/lymphoma protein 1B (TCL1B) (Homo sapiens (Human)).